The following is a 581-amino-acid chain: Coiled-coil domain-containing protein 102A (581 aa).

Disordered stretches follow at residues 1-61 (MNHT…GLGC), 156-219 (QRVR…IGTD), 496-517 (QAEDELDEAHNQTRKLQRSLDE), and 534-581 (SRLR…LQIP). The span at 39–59 (TPSPSGGTPSSSPPLLLSPGL) shows a compositional bias: low complexity. Residues 70 to 164 (REELRLRELE…AQRVRAEQSS (95 aa)) adopt a coiled-coil conformation. Positions 161–184 (EQSSPENASTAPESISSTASTHSN) are enriched in polar residues. Over residues 185–202 (QPREAEIKQDNQDEEGVR) the composition is skewed to basic and acidic residues. Residues 270–541 (AALEEDTSKL…LQSRLRRQQN (272 aa)) are a coiled coil. Over residues 559–581 (EDADGPPSDPDEDEEEELQLQIP) the composition is skewed to acidic residues.

This chain is Coiled-coil domain-containing protein 102A (ccdc102a), found in Danio rerio (Zebrafish).